Consider the following 460-residue polypeptide: MSNILQNRRSSFSSSTKSSLAKRQAPSSSENSVKLMPAMTKKRAPLSNITNQKIASRLQNSDSVHCSNKSAKLKIAPSVCVNASFSSNLQQSIVPHKVASSPSKSDDGSVSMDETRSSSDSYKSPQVEYIENDDVSAVVSIERKALSNLFITPNSETIDNYCSRDVLSDMKKMDKNQIVNIDSNNGDPQLCATFACDIYKHLRASEAKKRPDVDYMERVQKDVNSSMRGILVDWLIEVSEEYRLVPETLYLTVNYIDRYLSGNVISRQKLQLLGVACMMIAAKYEEICAPQVEEFCYITDNTYLKDEVLDMESDVLNYLKFEMTAPTTKCFLRRFVRAAHGVHEAPLMQLECMANYIAELSLLEYTMLSHSPSLVAASAIFLAKYILDPTRRPWNSTLQHYTQYKAMELRGCVKDLQRLCSTAHGSTLPAVREKYSQHKYKFVAKKFCPSVIPQEFFNNS.

Disordered stretches follow at residues 1–52 (MSNI…ITNQ) and 95–126 (PHKV…KSPQ). Low complexity-rich tracts occupy residues 10–19 (SSFSSSTKSS) and 100–111 (SSPSKSDDGSVS).

Belongs to the cyclin family. Cyclin AB subfamily. As to quaternary structure, interacts with FZR2/CCS52A1, FZR1/CCS52A2 and FZR3/CCS52B.

This Arabidopsis thaliana (Mouse-ear cress) protein is Cyclin-A1-1 (CYCA1-1).